Consider the following 622-residue polypeptide: Neuronal acetylcholine receptor subunit alpha-4 (622 aa).

The first 23 residues, 1–23, serve as a signal peptide directing secretion; it reads MGFLVSKGNLLLLLCASIFPAFG. At 24 to 237 the chain is on the extracellular side; sequence HVETRAHAEE…ITYSFIIRRL (214 aa). Asn-52 carries N-linked (GlcNAc...) asparagine glycosylation. 2 residues coordinate Ca(2+): Val-71 and Glu-73. The N-linked (GlcNAc...) asparagine glycan is linked to Asn-102. 2 disulfide bridges follow: Cys-156-Cys-170 and Cys-220-Cys-221. Residues 238–262 form a helical membrane-spanning segment; the sequence is PLFYTINLIIPCLLISCLTVLVFYL. A lipid anchor (S-palmitoyl cysteine) is attached at Cys-266. Helical transmembrane passes span 270–288 and 304–325; these read ITLC…LLIT and YLLF…VLNV. The Cytoplasmic segment spans residues 326 to 595; the sequence is HHRSPRTHTM…WKYVAMVIDR (270 aa). Disordered regions lie at residues 380 to 477 and 497 to 516; these read WSET…TEEG and QTNG…LNEE. Over residues 390–407 the composition is skewed to low complexity; it reads TTSSSPSPQSNEPSPTSS. 2 stretches are compositionally biased toward polar residues: residues 450–472 and 497–508; these read SDTQ…YSPN and QTNGHSSASPAS. Residues 596–614 form a helical membrane-spanning segment; that stretch reads IFLWMFIIVCLLGTVGLFL.

Belongs to the ligand-gated ion channel (TC 1.A.9) family. Acetylcholine receptor (TC 1.A.9.1) subfamily. Alpha-4/CHRNA4 sub-subfamily. As to quaternary structure, neuronal AChR is composed of two different types of subunits: alpha and beta. CHRNA4 forms heteropentameric neuronal acetylcholine receptors with CHRNB2 and CHRNB4, as well as CHRNA5 and CHRNB3 as accesory subunits. Found in two major stoichiometric forms, LS (low agonist sensitivity): (CHRNA4)3:(CHRNB2)2 and HS (high agonist sensitivity): (CHRNA4)2:(CHRNB2)3, the two stoichiometric forms differ in their unitary conductance, calcium permeability, ACh sensitivity and potentiation by divalent cation. Cells produce predominantly an (CHRNA4)3:(CHRNB2)2 nAChR. The (CHRNA4)2:(CHRNB2)3 expression is selectively up-regulated by nicotine and has lower single channel conductance and calcium permeability. In the striatum, also forms CHRNA4:CHRNA6:CHRNB2 complexes. Also found in the stoichiometric form: (CHRNA4:CHRNB2)2:CHRNB3.

The protein localises to the synaptic cell membrane. Its subcellular location is the cell membrane. It carries out the reaction Ca(2+)(in) = Ca(2+)(out). The enzyme catalyses K(+)(in) = K(+)(out). It catalyses the reaction Na(+)(in) = Na(+)(out). With respect to regulation, activated by a myriad of ligands such as acetylcholine, cytisine, nicotine, choline and epibatidine. Channel potentiation by calcium is stoichiometry-selective, CHRNA4:CHRNB2 nACh receptor is achieved by calcium association with topographically distinct sites framed by anionic residues within the CHRNA4 subunit and between the CHRNA4 and CHRNB2 subunits. nAChR activity is inhibited by the antagonist alpha-conotoxins BuIA, PnIA, GID and MII, small disulfide-constrained peptides from cone snails. In terms of biological role, component of neuronal acetylcholine receptors (nAChRs) that function as pentameric, ligand-gated cation channels with high calcium permeability among other activities. nAChRs are excitatory neurotrasnmitter receptors formed by a collection of nAChR subunits known to mediate synaptic transmission in the nervous system and the neuromuscular junction. Each nAchR subunit confers differential attributes to channel properties, including activation, deactivation and desensitization kinetics, pH sensitivity, cation permeability, and binding to allosteric modulators. CHRNA4 forms heteropentameric neuronal acetylcholine receptors with CHRNB2 and CHRNB4, as well as CHRNA5 and CHRNB3 as accesory subunits. Is the most abundant nAChR subtype expressed in the central nervous system. Found in two major stoichiometric forms,(CHRNA4)3:(CHRNB2)2 and (CHRNA4)2:(CHRNB2)3, the two stoichiometric forms differ in their unitary conductance, calcium permeability, ACh sensitivity and potentiation by divalent cation. Involved in the modulation of calcium-dependent signaling pathways, influences the release of neurotransmitters, including dopamine, glutamate and GABA. This Gallus gallus (Chicken) protein is Neuronal acetylcholine receptor subunit alpha-4 (CHRNA4).